Reading from the N-terminus, the 147-residue chain is DNA polymerase III subunit chi (147 aa).

The protein belongs to the DNA polymerase III chi/HolC chain family. The DNA polymerase III holoenzyme complex contains at least 10 different subunits organized into 3 functionally essential subassemblies: the Pol III core, the beta sliding clamp processivity factor and the clamp-loading complex. The Pol III core (subunits alpha, epsilon and theta) contains the polymerase and the 3'-5' exonuclease proofreading activities. The polymerase is tethered to the template via the dimeric beta sliding clamp processivity factor. The clamp-loading complex (also called gamma complex) assembles the beta sliding clamp onto the primed template and plays a central role in the organization and communication at the replication fork. The clamp-loading complex contains delta, delta', psi and chi, and 3 copies of either or both of two different DnaX proteins, gamma and tau. The DNA replisome complex has a single clamp loader (3 tau and 1 each of delta, delta', psi and chi subunits) which binds 3 Pol III cores (1 core on the leading strand and 2 on the lagging strand) each with a beta sliding clamp dimer. Additional proteins in the replisome are other copies of gamma, psi (holD) and chi (this protein), SSB, DNA helicase and RNA primase. The clamp loader hydrolyzes ATP to assemble the beta processivity factor onto the primed template and plays a central role in the organization and communication at the replication fork. The only subunit of the DNA polymerase III holoenzyme known to interact with single-stranded DNA binding protein (SSB). Interacts directly with the psi subunit (holD). Interacts directly with DNA helicase YoaA. It binds to HolD and YoaA, but not both simultaneously.

The enzyme catalyses DNA(n) + a 2'-deoxyribonucleoside 5'-triphosphate = DNA(n+1) + diphosphate. In terms of biological role, part of the beta sliding clamp loading complex, which hydrolyzes ATP to load the beta clamp onto primed DNA to form the DNA replication pre-initiation complex. DNA polymerase III is a complex, multichain enzyme responsible for most of the replicative synthesis in bacteria. This DNA polymerase also exhibits 3' to 5' exonuclease activity. Genetically identified as involved in the repair of replication forks and tolerance of the chain-terminating nucleoside analog 3' AZT. This subunit may stabilize YoaA and/or stimulate the helicase activity of YoaA. In Escherichia coli (strain K12), this protein is DNA polymerase III subunit chi.